A 222-amino-acid polypeptide reads, in one-letter code: Coiled-coil domain-containing protein 43 (222 aa).

A Glycyl lysine isopeptide (Lys-Gly) (interchain with G-Cter in SUMO1) cross-link involves residue K93. Residues 119–143 (SEEEKQRKAALLAQYADVTDEEDEA) are a coiled coil. The interval 136–222 (VTDEEDEADK…KRTQKGERKR (87 aa)) is disordered. T137 carries the phosphothreonine modification. Polar residues predominate over residues 152–168 (STANVSSDRTLFRNTNV). The segment covering 172 to 209 (LNARKLERDSLRDESQRKKEQDKLQREKDKLAKQERKE) has biased composition (basic and acidic residues). Positions 175–217 (RKLERDSLRDESQRKKEQDKLQREKDKLAKQERKEKEKKRTQK) form a coiled coil. Residues 210–222 (KEKKRTQKGERKR) are compositionally biased toward basic residues.

Belongs to the CCDC43 family.

The polypeptide is Coiled-coil domain-containing protein 43 (Ccdc43) (Mus musculus (Mouse)).